The sequence spans 431 residues: Adenylosuccinate synthetase (431 aa).

Residues 12-18 (GDEGKGK) and 40-42 (GHT) contribute to the GTP site. Asp13 acts as the Proton acceptor in catalysis. Mg(2+) is bound by residues Asp13 and Gly40. Residues 13 to 16 (DEGK), 38 to 41 (NAGH), Thr129, Arg143, Gln224, Thr239, and Arg303 each bind IMP. Catalysis depends on His41, which acts as the Proton donor. 299-305 (VTTGRAR) contacts substrate. Residues Arg305, 331–333 (KLD), and 413–415 (GVG) each bind GTP.

The protein belongs to the adenylosuccinate synthetase family. As to quaternary structure, homodimer. Mg(2+) serves as cofactor.

Its subcellular location is the cytoplasm. It catalyses the reaction IMP + L-aspartate + GTP = N(6)-(1,2-dicarboxyethyl)-AMP + GDP + phosphate + 2 H(+). The protein operates within purine metabolism; AMP biosynthesis via de novo pathway; AMP from IMP: step 1/2. In terms of biological role, plays an important role in the de novo pathway of purine nucleotide biosynthesis. Catalyzes the first committed step in the biosynthesis of AMP from IMP. The protein is Adenylosuccinate synthetase of Mycobacteroides abscessus (strain ATCC 19977 / DSM 44196 / CCUG 20993 / CIP 104536 / JCM 13569 / NCTC 13031 / TMC 1543 / L948) (Mycobacterium abscessus).